A 461-amino-acid chain; its full sequence is UDP-glucose 6-dehydrogenase TuaD (461 aa).

Residues 3–20 (KIAVIGTGYVGLVSGTCF), valine 12, aspartate 31, lysine 36, threonine 122, and glutamate 156 each bind NAD(+). Residues 152 to 156 (EFLRE), lysine 205, asparagine 209, 250 to 254 (FLKAG), and glycine 258 contribute to the substrate site. The Nucleophile role is filled by cysteine 261. Position 264 (lysine 264) interacts with NAD(+). Substrate is bound at residue lysine 321. Arginine 328 contributes to the NAD(+) binding site.

It belongs to the UDP-glucose/GDP-mannose dehydrogenase family. Post-translationally, phosphorylated by YwqD and dephosphorylated by YwqE in vitro.

It is found in the cytoplasm. The catalysed reaction is UDP-alpha-D-glucose + 2 NAD(+) + H2O = UDP-alpha-D-glucuronate + 2 NADH + 3 H(+). Its pathway is nucleotide-sugar biosynthesis; UDP-alpha-D-glucuronate biosynthesis; UDP-alpha-D-glucuronate from UDP-alpha-D-glucose: step 1/1. With respect to regulation, activated by phosphorylation; inhibited by dephosphorylation. Functionally, catalyzes the conversion of UDP-glucose into UDP-glucuronate, one of the precursors of teichuronic acid. In Bacillus subtilis (strain 168), this protein is UDP-glucose 6-dehydrogenase TuaD (tuaD).